We begin with the raw amino-acid sequence, 405 residues long: Acetate kinase (405 aa).

Residue Asn-7 coordinates Mg(2+). Lys-14 contributes to the ATP binding site. Arg-92 contributes to the substrate binding site. Catalysis depends on Asp-149, which acts as the Proton donor/acceptor. Residues 209–213 and 284–286 each bind ATP; these read HLGNG and DMR. A Mg(2+)-binding site is contributed by Glu-389.

This sequence belongs to the acetokinase family. In terms of assembly, homodimer. It depends on Mg(2+) as a cofactor. Mn(2+) is required as a cofactor.

It localises to the cytoplasm. The enzyme catalyses acetate + ATP = acetyl phosphate + ADP. It functions in the pathway metabolic intermediate biosynthesis; acetyl-CoA biosynthesis; acetyl-CoA from acetate: step 1/2. In terms of biological role, catalyzes the formation of acetyl phosphate from acetate and ATP. Can also catalyze the reverse reaction. The chain is Acetate kinase from Borrelia garinii subsp. bavariensis (strain ATCC BAA-2496 / DSM 23469 / PBi) (Borreliella bavariensis).